Here is a 192-residue protein sequence, read N- to C-terminus: NF-kappa-B inhibitor-interacting Ras-like protein 1 (192 aa).

Position 11-18 (11-18 (GLLSVGKT)) interacts with GTP. Residues 35 to 43 (DCETMEDVY) carry the Effector region motif. An interactions with NFKBIA and NFKBIB region spans residues 58–93 (HLYDTRGLQEGVELPKHYFSFADGFVLVYSVNNLES). GTP contacts are provided by residues 61–65 (DTRGL) and 120–123 (NKID). Residues 168–192 (LSQPQSKSSFPLPGRKNKGNSSSEN) form a disordered region.

The protein belongs to the small GTPase superfamily. Ras family. KappaB-Ras subfamily. Interacts with both NF-kappa-B inhibitor alpha (NFKBIA) and beta (NFKBIB) in vitro. However, it probably only interacts with NFKBIB in vivo. Forms a complex with NFKBIB and NF-kappa-B heterodimer (p50/NFKB1 and p65/RELA). Also interacts with c-Rel (REL).

The protein localises to the cytoplasm. Functionally, atypical Ras-like protein that acts as a potent regulator of NF-kappa-B activity by preventing the degradation of NF-kappa-B inhibitor beta (NFKBIB) by most signals, explaining why NFKBIB is more resistant to degradation. May act by blocking phosphorylation of NFKBIB and mediating cytoplasmic retention of p65/RELA NF-kappa-B subunit. It is unclear whether it acts as a GTPase. Both GTP- and GDP-bound forms block phosphorylation of NFKBIB. The polypeptide is NF-kappa-B inhibitor-interacting Ras-like protein 1 (NKIRAS1) (Macaca fascicularis (Crab-eating macaque)).